A 298-amino-acid chain; its full sequence is Enoyl-CoA hydratase AFT6-1 (298 aa).

Residues 1 to 39 (MTYSTTKSVAMNPDEDAPPSDINSSGRLMSHSEVEPRGN) are disordered.

The protein belongs to the enoyl-CoA hydratase/isomerase family.

The enzyme catalyses a (3S)-3-hydroxyacyl-CoA = a (2E)-enoyl-CoA + H2O. The catalysed reaction is a 4-saturated-(3S)-3-hydroxyacyl-CoA = a (3E)-enoyl-CoA + H2O. The protein operates within mycotoxin biosynthesis. Enoyl-CoA hydratase; part of the gene clusters that mediate the biosynthesis of the host-selective toxins (HSTs) AF-toxins responsible for Alternaria black spot of strawberry disease by the strawberry pathotype. AF-toxin I and III are valine derivatives of 2,3-dyhydroxy-isovaleric acid and 2-hydroxy-isovaleric acid respectively, while AF II is an isoleucine derivative of 2-hydroxy-valeric acid. These derivatives are bound to a 9,10-epoxy-8-hydroxy-9-methyl-decatrienoic acid (EDA) moiety. On cellular level, AF-toxin affects plasma membrane of susceptible cells and cause a sudden increase in loss of K(+) after a few minutes of toxin treatment. The aldo-keto reductase AFTS1 catalyzes the conversion of 2-keto-isovaleric acid (2-KIV) to 2-hydroxy-isovaleric acid (2-HIV) by reduction of its ketone to an alcohol. The acyl-CoA ligase AFT1, the hydrolase AFT2 and the enoyl-CoA hydratases AFT3 and AFT6, but also the polyketide synthase AFT9, the acyl-CoA dehydrogenase AFT10, the cytochrome P450 monooxygenase AFT11 and the oxidoreductase AFT12 are all involved in the biosynthesis of the AK-, AF- and ACT-toxin common EDA structural moiety. The exact function of each enzyme, and of additional enzymes identified within the AF-toxin clusters have still to be determined. This chain is Enoyl-CoA hydratase AFT6-1, found in Alternaria alternata (Alternaria rot fungus).